A 450-amino-acid polypeptide reads, in one-letter code: Glucose-6-phosphate isomerase (450 aa).

Catalysis depends on E290, which acts as the Proton donor. Catalysis depends on residues H311 and K425.

The protein belongs to the GPI family.

The protein localises to the cytoplasm. It catalyses the reaction alpha-D-glucose 6-phosphate = beta-D-fructose 6-phosphate. Its pathway is carbohydrate biosynthesis; gluconeogenesis. It participates in carbohydrate degradation; glycolysis; D-glyceraldehyde 3-phosphate and glycerone phosphate from D-glucose: step 2/4. In terms of biological role, catalyzes the reversible isomerization of glucose-6-phosphate to fructose-6-phosphate. In Leuconostoc mesenteroides subsp. mesenteroides (strain ATCC 8293 / DSM 20343 / BCRC 11652 / CCM 1803 / JCM 6124 / NCDO 523 / NBRC 100496 / NCIMB 8023 / NCTC 12954 / NRRL B-1118 / 37Y), this protein is Glucose-6-phosphate isomerase.